A 171-amino-acid polypeptide reads, in one-letter code: Adenine phosphoribosyltransferase (171 aa).

The protein belongs to the purine/pyrimidine phosphoribosyltransferase family. As to quaternary structure, homodimer.

The protein localises to the cytoplasm. The catalysed reaction is AMP + diphosphate = 5-phospho-alpha-D-ribose 1-diphosphate + adenine. The protein operates within purine metabolism; AMP biosynthesis via salvage pathway; AMP from adenine: step 1/1. In terms of biological role, catalyzes a salvage reaction resulting in the formation of AMP, that is energically less costly than de novo synthesis. The polypeptide is Adenine phosphoribosyltransferase (Geotalea daltonii (strain DSM 22248 / JCM 15807 / FRC-32) (Geobacter daltonii)).